The primary structure comprises 358 residues: DNA replication and repair protein RecF (358 aa).

Residue G30–T37 participates in ATP binding.

The protein belongs to the RecF family.

The protein resides in the cytoplasm. Functionally, the RecF protein is involved in DNA metabolism; it is required for DNA replication and normal SOS inducibility. RecF binds preferentially to single-stranded, linear DNA. It also seems to bind ATP. This is DNA replication and repair protein RecF from Histophilus somni (strain 2336) (Haemophilus somnus).